A 756-amino-acid chain; its full sequence is Deoxynucleotidyltransferase terminal-interacting protein 2 (756 aa).

Positions 1–99 (MVVTRSARAK…AESNYSVSEH (99 aa)) are disordered. Over residues 9–21 (AKASIQAASAESS) the composition is skewed to low complexity. Ser-21 carries the post-translational modification Phosphoserine. Polar residues-rich tracts occupy residues 35-55 (PESSTGSDARTTAESQTTGKQ) and 80-96 (EPSTDGETSEAESNYSV). Ser-117 is subject to Phosphoserine. At Thr-129 the chain carries Phosphothreonine. Residues Ser-141, Ser-145, Ser-148, Ser-184, and Ser-194 each carry the phosphoserine modification. The tract at residues 156 to 261 (PTEKTTGARR…LSEINKPNFY (106 aa)) is disordered. Over residues 201–211 (RRTRSMQRKLK) the composition is skewed to basic residues. Residues Lys-217 and Lys-220 each participate in a glycyl lysine isopeptide (Lys-Gly) (interchain with G-Cter in SUMO2) cross-link. The residue at position 232 (Thr-232) is a Phosphothreonine. Residues Ser-239, Ser-251, and Ser-253 each carry the phosphoserine modification. The segment covering 242–256 (RQTSHLQARSLSEIN) has biased composition (polar residues). Residues Lys-257, Lys-316, and Lys-321 each participate in a glycyl lysine isopeptide (Lys-Gly) (interchain with G-Cter in SUMO2) cross-link. A phosphoserine mark is found at Ser-324 and Ser-330. A Glycyl lysine isopeptide (Lys-Gly) (interchain with G-Cter in SUMO2) cross-link involves residue Lys-345. Residue Ser-381 is modified to Phosphoserine. A Glycyl lysine isopeptide (Lys-Gly) (interchain with G-Cter in SUMO2) cross-link involves residue Lys-384. A phosphoserine mark is found at Ser-434 and Ser-512. Residues 505–542 (LEEEDKASEVAIEEEKEEEEDEKSEEDSSDHDENEDEF) adopt a coiled-coil conformation. Residues 510-547 (KASEVAIEEEKEEEEDEKSEEDSSDHDENEDEFSDEED) form a disordered region. Residues 548 to 605 (FLNSTKAKLLKLTSSSIDPGLSIKQLGGLYINFNADKLQSNKRTLTQIKEKKKNELLQ) form a tdBR region; mediates interaction with DNTT region. Residue Lys-558 forms a Glycyl lysine isopeptide (Lys-Gly) (interchain with G-Cter in SUMO2) linkage. A Phosphoserine modification is found at Ser-569. Glycyl lysine isopeptide (Lys-Gly) (interchain with G-Cter in SUMO2) cross-links involve residues Lys-584 and Lys-606. At Thr-610 the chain carries Phosphothreonine. Residues Lys-626, Lys-649, Lys-658, Lys-686, and Lys-731 each participate in a glycyl lysine isopeptide (Lys-Gly) (interchain with G-Cter in SUMO2) cross-link.

As to quaternary structure, forms a ternary complex with DNTT and core histone; interaction with PCNA releases DNTT and H2A/H2B histones from this ternary complex. Interacts with ESR1, ESR2, PPARG and RXRA. Part of the small subunit (SSU) processome, composed of more than 70 proteins and the RNA chaperone small nucleolar RNA (snoRNA) U3. In terms of tissue distribution, widely expressed with higher levels in testis.

Its subcellular location is the nucleus. The protein localises to the nucleolus. In terms of biological role, regulates the transcriptional activity of DNTT and ESR1. May function as a chromatin remodeling protein. Part of the small subunit (SSU) processome, first precursor of the small eukaryotic ribosomal subunit. During the assembly of the SSU processome in the nucleolus, many ribosome biogenesis factors, an RNA chaperone and ribosomal proteins associate with the nascent pre-rRNA and work in concert to generate RNA folding, modifications, rearrangements and cleavage as well as targeted degradation of pre-ribosomal RNA by the RNA exosome. This Homo sapiens (Human) protein is Deoxynucleotidyltransferase terminal-interacting protein 2.